Consider the following 880-residue polypeptide: MOG interacting and ectopic P-granules protein 1 (880 aa).

Residues 1–20 (MVTSDETVLATTTNKTSITT) show a composition bias toward polar residues. Disordered regions lie at residues 1–37 (MVTSDETVLATTTNKTSITTEPMEPKSSDESTDSETD), 82–257 (DKVE…DDNE), and 350–370 (ERPKLSDSEKRERQQMKQHNP). Over residues 23 to 37 (MEPKSSDESTDSETD) the composition is skewed to basic and acidic residues. Positions 87–105 (ATNSVVDLSSNGSSATTSV) are enriched in polar residues. Acidic residues predominate over residues 108 to 120 (EEQEEKANEDETN). 2 stretches are compositionally biased toward basic and acidic residues: residues 154–170 (SKSDGETETDRVAIKDS) and 183–193 (KPEEKEEKNDT). A compositionally biased stretch (acidic residues) spans 215-224 (QLDDDDDDIQ). 2 stretches are compositionally biased toward basic and acidic residues: residues 235-252 (QKTEETKQEPKQEAKAEP) and 350-364 (ERPKLSDSEKRERQQ). 2 C2H2-type zinc fingers span residues 436–459 (SRCGVCGFQTESKLAMAAHKETLH) and 465–488 (FQCTLCKETDTNEQRMKEHYFEAH). The CCHC-type zinc-finger motif lies at 501–523 (YPCAICEEDFNFKGVREQHYKQC). 4 consecutive C2H2-type zinc fingers follow at residues 728 to 751 (FQCEICDQTVHEKDKYLSHLQVLH), 768 to 791 (LACSRCRDRFWTYEGLERHLVMSH), 809 to 830 (GRCKTCGKQYAFNMLQHLVADH), and 841 to 864 (YSCDVCAFKCSSYQTLEAHLSSTH).

In terms of assembly, interacts with hda-1, let-418, lin-1, mog-1, mog-4, mog-5, mog-6, pie-1 and unc-98.

It is found in the nucleus. Has a broad role in development, specifically in the genetic pathway SynMuvB that negatively regulates specification of the vulval cell fate. Required for fem-3 3'-UTR-mediated repression in the regulation of the sperm/oocyte switch. Acts by regulating the translation of fem-3 mRNA, by binding to its 3'-UTR. This is MOG interacting and ectopic P-granules protein 1 from Caenorhabditis briggsae.